The primary structure comprises 141 residues: Guanyl-specific ribonuclease Sa3 (141 aa).

The segment at residues 1–36 (MRIPPRLVALAGAAAVAATLIAGPVAAAAPASHAVA) is a signal peptide (or 43). Cys52 and Cys141 are disulfide-bonded. The Proton acceptor role is filled by Glu99. His130 acts as the Proton donor in catalysis.

The protein belongs to the ribonuclease N1/T1 family.

It localises to the secreted. The enzyme catalyses [RNA] containing guanosine + H2O = an [RNA fragment]-3'-guanosine-3'-phosphate + a 5'-hydroxy-ribonucleotide-3'-[RNA fragment].. This is Guanyl-specific ribonuclease Sa3 (rnaSA3) from Kitasatospora aureofaciens (Streptomyces aureofaciens).